We begin with the raw amino-acid sequence, 66 residues long: Surface composition regulator (66 aa).

It belongs to the GlgS family.

Its function is as follows. Major determinant of cell surface composition. Negatively regulates motility, adhesion and synthesis of biofilm exopolysaccharides. The polypeptide is Surface composition regulator (Shigella dysenteriae serotype 1 (strain Sd197)).